The sequence spans 317 residues: Epidermal growth factor-like protein (317 aa).

Residues M1–A23 form the signal peptide. The interval T24–Y33 is may be required for E.coli agglutination activity. EGF-like domains follow at residues H93–I128, V130–T161, G163–Q195, A208–A243, K245–I280, and Y282–V315. 18 disulfide bridges follow: C98–C107, C102–C113, C115–C127, C131–C140, C135–C145, C147–C160, C164–C174, C168–C180, C182–C194, C213–C222, C217–C228, C230–C242, C246–C255, C250–C261, C263–C279, C283–C292, C287–C298, and C300–C314.

It is found in the secreted. Its function is as follows. Binds to lipopolysaccharides (LPS) present on the cell walls of Gram-negative bacteria, behaving as a pattern recognition receptor (PRR). Induces bacterial aggregation and enhances their subsequent clearance by the innate immune response. Binds to the inner core oligosaccharides region of rough-type bacterial LPS. Displays activity against the Gram-negative bacterium E.coli. Does not display any activity against the Gram-positive bacterium S.aureus or the fungi C.albicans. This Holotrichia diomphalia (Korean black chafer) protein is Epidermal growth factor-like protein.